The chain runs to 293 residues: Proline iminopeptidase (293 aa).

The Nucleophile role is filled by serine 105. The active site involves aspartate 244. Histidine 271 functions as the Proton donor in the catalytic mechanism.

This sequence belongs to the peptidase S33 family. In terms of assembly, part of the tricorn proteolytic complex.

The catalysed reaction is Release of N-terminal proline from a peptide.. Its function is as follows. Cleaves H-Pro-AMC as well as a wide spectrum of amino acid substrates and several peptide substrates without a proline at the N-terminus. Proteases F1, F2 and F3 degrade oligopeptides produced by Tricorn (themselves probably produced by the proteasome) yielding free amino acids. The polypeptide is Proline iminopeptidase (pip) (Thermoplasma acidophilum (strain ATCC 25905 / DSM 1728 / JCM 9062 / NBRC 15155 / AMRC-C165)).